The primary structure comprises 356 residues: MEQRRIVHIDMDAFYASVKQRDDPSLRGRPLAVGRGEARGVVAAASYEARRFGVRSAMPSVTAKRLCPELLFVPARFDVYRSVSAQIHDIFSRYTPLIQPLSLDEAYLDLTDHLGAYGSATLVADRIRADIHAETGLTASAGVSYNRFLAKLASDYRKPDGLFVITPAMGPEFVAALPVDAFHGIGPAMARKMRALGIETGADLRERDIETLTRHFGKAATFYYGISRGIDHRPVVVNRERKSLGTEQTYLRDLTSEADAHQALTQIAATLWGSAQRRQLQARTVTLKVKYADFRQITRARTLSAPVPSEEVLLETGQSLMAPLFPFVPGVRLLGLTLSGFHAAESPPCDQMELLF.

A UmuC domain is found at 6 to 186; that stretch reads IVHIDMDAFY…LPVDAFHGIG (181 aa). Mg(2+) is bound by residues D10 and D104. E105 is a catalytic residue.

It belongs to the DNA polymerase type-Y family. In terms of assembly, monomer. Mg(2+) is required as a cofactor.

Its subcellular location is the cytoplasm. The catalysed reaction is DNA(n) + a 2'-deoxyribonucleoside 5'-triphosphate = DNA(n+1) + diphosphate. Functionally, poorly processive, error-prone DNA polymerase involved in untargeted mutagenesis. Copies undamaged DNA at stalled replication forks, which arise in vivo from mismatched or misaligned primer ends. These misaligned primers can be extended by PolIV. Exhibits no 3'-5' exonuclease (proofreading) activity. May be involved in translesional synthesis, in conjunction with the beta clamp from PolIII. The chain is DNA polymerase IV from Gluconobacter oxydans (strain 621H) (Gluconobacter suboxydans).